The chain runs to 1387 residues: DNA-directed RNA polymerase subunit beta'' (1387 aa).

Zn(2+) is bound by residues cysteine 224, cysteine 295, cysteine 302, and cysteine 305.

Belongs to the RNA polymerase beta' chain family. RpoC2 subfamily. In plastids the minimal PEP RNA polymerase catalytic core is composed of four subunits: alpha, beta, beta', and beta''. When a (nuclear-encoded) sigma factor is associated with the core the holoenzyme is formed, which can initiate transcription. Zn(2+) is required as a cofactor.

Its subcellular location is the plastid. It is found in the chloroplast. It carries out the reaction RNA(n) + a ribonucleoside 5'-triphosphate = RNA(n+1) + diphosphate. Its function is as follows. DNA-dependent RNA polymerase catalyzes the transcription of DNA into RNA using the four ribonucleoside triphosphates as substrates. This chain is DNA-directed RNA polymerase subunit beta'', found in Panax ginseng (Korean ginseng).